A 411-amino-acid polypeptide reads, in one-letter code: MLIRKWKAGLLAGLSILALASSADAGEVRMTVAEYSAKTGPYFEEVKKAFEAENPGITLNFEVVPWDVLLQKLTTDISAGTNADLSIIGTRWLIDFVQQGIAEPLDGYMNDEFKGRFIETFLSPSVLDGKTYGLPIAASARAMYYNKDLFEKAGIKNPPANWDELKADAAKIKALGGENYGFGLQGKEIETDVYYYYAMWSYGTEILNKDGTSGLSTPGALEAAKLYKSMIDDGLTQPGVTSYAREDVQNLFKQGKVGMMITAPFLSNQIKEEAPNLKYGVAAIPAGPTGARGTYGVTDSVIMFQNSKNKEEAWKVLDFLFQKDWRAKFTQNEGFLPVNKEEAKMDYYVNNADLAAFTALLPDARFAPVIPGWEEIADITSNAMQSIYLGKGEPDAVLKDAAAKADAILKK.

An N-terminal signal peptide occupies residues 1–25 (MLIRKWKAGLLAGLSILALASSADA).

It belongs to the bacterial solute-binding protein 1 family. In terms of assembly, the complex is composed of two ATP-binding proteins (BRA0745), two transmembrane proteins (BRA0749) and a solute-binding protein (BRA0748).

The protein resides in the periplasm. Probably part of an ABC transporter complex. This Brucella suis biovar 1 (strain 1330) protein is Putative binding protein BRA0748/BS1330_II0741.